Here is a 64-residue protein sequence, read N- to C-terminus: Large ribosomal subunit protein bL28 (64 aa).

It belongs to the bacterial ribosomal protein bL28 family.

This chain is Large ribosomal subunit protein bL28, found in Syntrophobacter fumaroxidans (strain DSM 10017 / MPOB).